We begin with the raw amino-acid sequence, 67 residues long: uncharacterized protein (67 aa).

2 helical membrane passes run 6-26 (GQLW…CVLM) and 38-58 (NNII…IIII).

It is found in the membrane. This is an uncharacterized protein from Dictyostelium discoideum (Social amoeba).